A 359-amino-acid chain; its full sequence is Peptide chain release factor 1 (359 aa).

N5-methylglutamine is present on Gln-234. The interval 283-305 (SQKDAARAADRRAQVGSGDRSER) is disordered.

Belongs to the prokaryotic/mitochondrial release factor family. In terms of processing, methylated by PrmC. Methylation increases the termination efficiency of RF1.

The protein resides in the cytoplasm. Functionally, peptide chain release factor 1 directs the termination of translation in response to the peptide chain termination codons UAG and UAA. This chain is Peptide chain release factor 1, found in Methylobacterium nodulans (strain LMG 21967 / CNCM I-2342 / ORS 2060).